Consider the following 1327-residue polypeptide: Kinectin (1327 aa).

The Cytoplasmic portion of the chain corresponds to 1-8; the sequence is MELYESTY. The helical; Signal-anchor for type II membrane protein transmembrane segment at 9 to 29 threads the bilayer; that stretch reads FIVLIPSVVITVIFLFFWLFM. Topologically, residues 30 to 1327 are lumenal; the sequence is KETLYDEVLA…EVNQQLTKET (1298 aa). Disordered regions lie at residues 49–181 and 197–216; these read STKT…EQDK and LSHQ…GLSK. Asparagine 69 is a glycosylation site (N-linked (GlcNAc...) asparagine). 2 stretches are compositionally biased toward basic and acidic residues: residues 73-86 and 111-135; these read RESD…DFKL and VRER…ESDA. Phosphoserine occurs at positions 75 and 77. Over residues 163–173 the composition is skewed to basic residues; the sequence is LKKKAGQKKSK. The stretch at 329–1327 forms a coiled coil; sequence ELSGLLHQLQ…EVNQQLTKET (999 aa). Asparagine 1031 is a glycosylation site (N-linked (GlcNAc...) asparagine). Serine 1060 carries the phosphoserine modification. N-linked (GlcNAc...) asparagine glycosylation is present at asparagine 1066. Serine 1290 carries the phosphoserine modification.

This sequence belongs to the kinectin family. Expressed in all tissues examined including 12-day embryo, adult heart, brain, ovary, kidney, lung, small intestine, spleen, thymus and pancreas.

It is found in the endoplasmic reticulum membrane. Its function is as follows. Receptor for kinesin thus involved in kinesin-driven vesicle motility. Accumulates in integrin-based adhesion complexes (IAC) upon integrin aggregation by fibronectin. The polypeptide is Kinectin (Mus musculus (Mouse)).